The sequence spans 179 residues: Crossover junction endodeoxyribonuclease RuvC (179 aa).

Active-site residues include Asp7, Glu67, and Asp139. The Mg(2+) site is built by Asp7, Glu67, and Asp139.

The protein belongs to the RuvC family. In terms of assembly, homodimer which binds Holliday junction (HJ) DNA. The HJ becomes 2-fold symmetrical on binding to RuvC with unstacked arms; it has a different conformation from HJ DNA in complex with RuvA. In the full resolvosome a probable DNA-RuvA(4)-RuvB(12)-RuvC(2) complex forms which resolves the HJ. Requires Mg(2+) as cofactor.

The protein resides in the cytoplasm. The enzyme catalyses Endonucleolytic cleavage at a junction such as a reciprocal single-stranded crossover between two homologous DNA duplexes (Holliday junction).. Its function is as follows. The RuvA-RuvB-RuvC complex processes Holliday junction (HJ) DNA during genetic recombination and DNA repair. Endonuclease that resolves HJ intermediates. Cleaves cruciform DNA by making single-stranded nicks across the HJ at symmetrical positions within the homologous arms, yielding a 5'-phosphate and a 3'-hydroxyl group; requires a central core of homology in the junction. The consensus cleavage sequence is 5'-(A/T)TT(C/G)-3'. Cleavage occurs on the 3'-side of the TT dinucleotide at the point of strand exchange. HJ branch migration catalyzed by RuvA-RuvB allows RuvC to scan DNA until it finds its consensus sequence, where it cleaves and resolves the cruciform DNA. The sequence is that of Crossover junction endodeoxyribonuclease RuvC from Sorangium cellulosum (strain So ce56) (Polyangium cellulosum (strain So ce56)).